A 311-amino-acid chain; its full sequence is Olfactory receptor 10G9 (311 aa).

At 1-23 the chain is on the extracellular side; it reads MSKTSLVTAFILTGLPHAPGLDA. The chain crosses the membrane as a helical span at residues 24-44; it reads PLFGIFLVVYVLTVLGNLLIL. Residues 45–52 lie on the Cytoplasmic side of the membrane; it reads LVIRVDSH. A helical membrane pass occupies residues 53–73; sequence LHTPMYYFLTNLSFIDMWFST. Topologically, residues 74–98 are extracellular; the sequence is VTVPKMLMTLVSPSGRAISFHSCVA. Residues cysteine 96 and cysteine 188 are joined by a disulfide bond. Residues 99-119 traverse the membrane as a helical segment; that stretch reads QLYFFHFLGSTECFLYTVMSY. The Cytoplasmic portion of the chain corresponds to 120–138; sequence DRYLAISYPLRYTSMMSGS. Residues 139–159 form a helical membrane-spanning segment; the sequence is RCALLATSTWLSGSLHSAVQT. Residues 160-196 lie on the Extracellular side of the membrane; it reads ILTFHLPYCGPNQIQHYLCDAPPILKLACADTSANEM. Residues 197–216 traverse the membrane as a helical segment; the sequence is VIFVDIGLVASGCFLLIVLS. The Cytoplasmic segment spans residues 217–236; the sequence is YVSIVCSILRIHTSEGRHRA. The helical transmembrane segment at 237–257 threads the bilayer; it reads FQTCASHCIVVLCFFVPCVFI. At 258–268 the chain is on the extracellular side; sequence YLRPGSRDVVD. Residues 269-289 traverse the membrane as a helical segment; that stretch reads GVVAIFYTVLTPLLNPVVYTL. The Cytoplasmic segment spans residues 290–311; sequence RNKEVKKAVLKLRDKVAHSQGE.

The protein belongs to the G-protein coupled receptor 1 family.

The protein resides in the cell membrane. Its function is as follows. Odorant receptor. This Homo sapiens (Human) protein is Olfactory receptor 10G9 (OR10G9).